A 315-amino-acid chain; its full sequence is Probable cell division protein WhiA (315 aa).

The H-T-H motif DNA-binding region spans Ser280–Thr313.

This sequence belongs to the WhiA family.

In terms of biological role, involved in cell division and chromosome segregation. The protein is Probable cell division protein WhiA of Clostridium botulinum (strain Alaska E43 / Type E3).